Reading from the N-terminus, the 335-residue chain is MTEIYDFDKSAWDIKGSIAPIQPTTYSDGRLVPQVRVIDPGLGDRKDECFMYMFLLGVVEDSDSLGPPIGRAFGSLPLGVGRSTAKPEELLKEATELDIVVRRTAGLNEKLVFYNNTPLTLLTPWRKVLTTGSVFNANQVCNAVNLIPLDTPQRFRVVYMSITRLSDNGYYTVPRRMLEFRSVNAVAFNLLVTLRIDKAIGPGKIIDNTEQLPEATFMVHIGNFRRKKSEVYSADYCKMKIEKMGLVFALGGIGGTSLHIRSTGKMSKTLHAQLGFKKTLCYPLMGINEDLNRLLWRSRCKIVRIQAVLQPSVPQEFRIYDDVIINDDQGLFKVL.

This sequence belongs to the morbillivirus/respirovirus/rubulavirus M protein family. Homodimer. Dimerization is critical for virion formation. Interacts with host ANP32B.

The protein resides in the virion. The protein localises to the host cell membrane. Its function is as follows. The M protein has a crucial role in virus assembly and interacts with the RNP complex as well as with the viral membrane. Associates with phosphatidylserine (PS) and phosphatidylinositol 4,5-bisphosphate (PIP2) at the plasma membrane. Interaction with PIP2 triggers matrix protein lattice polymerization. Matrix proteins induce host membrane deformation and curvature necessary for virion assembly/budding. In Measles virus (strain Hu2) (MeV), this protein is Matrix protein (M).